The sequence spans 1075 residues: DNA-directed RNA polymerase subunit beta (1075 aa).

It belongs to the RNA polymerase beta chain family. As to quaternary structure, in plastids the minimal PEP RNA polymerase catalytic core is composed of four subunits: alpha, beta, beta', and beta''. When a (nuclear-encoded) sigma factor is associated with the core the holoenzyme is formed, which can initiate transcription.

Its subcellular location is the plastid. The protein resides in the chloroplast. The catalysed reaction is RNA(n) + a ribonucleoside 5'-triphosphate = RNA(n+1) + diphosphate. In terms of biological role, DNA-dependent RNA polymerase catalyzes the transcription of DNA into RNA using the four ribonucleoside triphosphates as substrates. The chain is DNA-directed RNA polymerase subunit beta from Sorghum bicolor (Sorghum).